The primary structure comprises 642 residues: 1,4-alpha-glucan branching enzyme GlgB (642 aa).

Asp-304 functions as the Nucleophile in the catalytic mechanism. Glu-355 acts as the Proton donor in catalysis.

Belongs to the glycosyl hydrolase 13 family. GlgB subfamily. As to quaternary structure, monomer.

The enzyme catalyses Transfers a segment of a (1-&gt;4)-alpha-D-glucan chain to a primary hydroxy group in a similar glucan chain.. The protein operates within glycan biosynthesis; glycogen biosynthesis. Its function is as follows. Catalyzes the formation of the alpha-1,6-glucosidic linkages in glycogen by scission of a 1,4-alpha-linked oligosaccharide from growing alpha-1,4-glucan chains and the subsequent attachment of the oligosaccharide to the alpha-1,6 position. This is 1,4-alpha-glucan branching enzyme GlgB from Streptococcus pneumoniae serotype 4 (strain ATCC BAA-334 / TIGR4).